A 32-amino-acid chain; its full sequence is Basic phospholipase A2 (32 aa).

The Ca(2+) site is built by tyrosine 26, glycine 28, and glycine 30.

Belongs to the phospholipase A2 family. Group II subfamily. Requires Ca(2+) as cofactor. Expressed by the venom gland.

The protein localises to the secreted. It catalyses the reaction a 1,2-diacyl-sn-glycero-3-phosphocholine + H2O = a 1-acyl-sn-glycero-3-phosphocholine + a fatty acid + H(+). Functionally, snake venom phospholipase A2 (PLA2) that inhibits neuromuscular transmission by blocking acetylcholine release from the nerve termini. PLA2 catalyzes the calcium-dependent hydrolysis of the 2-acyl groups in 3-sn-phosphoglycerides. In Gloydius halys (Chinese water mocassin), this protein is Basic phospholipase A2.